A 121-amino-acid polypeptide reads, in one-letter code: Small ribosomal subunit protein bS6 (121 aa).

This sequence belongs to the bacterial ribosomal protein bS6 family.

In terms of biological role, binds together with bS18 to 16S ribosomal RNA. In Rickettsia canadensis (strain McKiel), this protein is Small ribosomal subunit protein bS6.